A 317-amino-acid polypeptide reads, in one-letter code: tRNA pseudouridine synthase B (317 aa).

The Nucleophile role is filled by Asp-47.

The protein belongs to the pseudouridine synthase TruB family. Type 1 subfamily.

It catalyses the reaction uridine(55) in tRNA = pseudouridine(55) in tRNA. Its function is as follows. Responsible for synthesis of pseudouridine from uracil-55 in the psi GC loop of transfer RNAs. This chain is tRNA pseudouridine synthase B, found in Shewanella denitrificans (strain OS217 / ATCC BAA-1090 / DSM 15013).